The chain runs to 331 residues: NAD-dependent protein deacetylase HST2 (331 aa).

The Deacetylase sirtuin-type domain occupies methionine 1–aspartate 262. NAD(+) contacts are provided by residues glycine 26 to tyrosine 46 and glutamine 109 to aspartate 112. Histidine 129 serves as the catalytic Proton acceptor. 4 residues coordinate Zn(2+): cysteine 137, cysteine 140, cysteine 161, and cysteine 164. Residues glycine 201 to serine 203, asparagine 226 to glutamate 228, and cysteine 248 each bind NAD(+). A coiled-coil region spans residues tyrosine 276–isoleucine 331. A disordered region spans residues glutamate 283 to aspartate 319.

The protein belongs to the sirtuin family. Class I subfamily. Requires Zn(2+) as cofactor.

The protein localises to the cytoplasm. Its subcellular location is the nucleus. The enzyme catalyses N(6)-acetyl-L-lysyl-[protein] + NAD(+) + H2O = 2''-O-acetyl-ADP-D-ribose + nicotinamide + L-lysyl-[protein]. Its function is as follows. NAD-dependent histone deacetylase that is involved in nuclear silencing events. Derepresses subtelomeric silencing and increases repression in nucleolar (rDNA) silencing. Its function is negatively regulated by active nuclear export. The polypeptide is NAD-dependent protein deacetylase HST2 (HST2) (Candida albicans (strain SC5314 / ATCC MYA-2876) (Yeast)).